The following is a 1388-amino-acid chain: DNA-directed RNA polymerase subunit beta (1388 aa).

The protein belongs to the RNA polymerase beta chain family. As to quaternary structure, the RNAP catalytic core consists of 2 alpha, 1 beta, 1 beta' and 1 omega subunit. When a sigma factor is associated with the core the holoenzyme is formed, which can initiate transcription.

The enzyme catalyses RNA(n) + a ribonucleoside 5'-triphosphate = RNA(n+1) + diphosphate. In terms of biological role, DNA-dependent RNA polymerase catalyzes the transcription of DNA into RNA using the four ribonucleoside triphosphates as substrates. In Xylella fastidiosa (strain Temecula1 / ATCC 700964), this protein is DNA-directed RNA polymerase subunit beta.